The following is a 667-amino-acid chain: High affinity sulfate transporter 1 (667 aa).

The tract at residues 16–38 is disordered; that stretch reads ETRSNSSSHRHGGGGGGDDTTSL. 11 consecutive transmembrane segments (helical) span residues 106–126, 131–151, 156–176, 185–205, 208–228, 269–289, 296–316, 350–370, 425–445, 452–472, and 486–506; these read GDFI…LAYA, LDPW…AFMG, IAIG…SNEI, LRLA…LGVC, GFLI…GAAI, WETI…KYIA, FWVS…FVYI, GAGV…AIAI, VSNI…TPLF, VLAS…AMVL, and GAFF…AVAI. The STAS domain maps to 537–660; sequence QYPKAAQIPG…LTVADAVATY (124 aa).

The protein belongs to the SLC26A/SulP transporter (TC 2.A.53) family.

It localises to the membrane. Its function is as follows. High-affinity H(+)/sulfate cotransporter that mediates the uptake of sulfate by plant roots from low concentrations of sulfate in the soil solution. This chain is High affinity sulfate transporter 1 (ST1), found in Stylosanthes hamata (Caribbean stylo).